We begin with the raw amino-acid sequence, 88 residues long: Small ribosomal subunit protein uS15 (88 aa).

Belongs to the universal ribosomal protein uS15 family. In terms of assembly, part of the 30S ribosomal subunit. Forms a bridge to the 50S subunit in the 70S ribosome, contacting the 23S rRNA.

Functionally, one of the primary rRNA binding proteins, it binds directly to 16S rRNA where it helps nucleate assembly of the platform of the 30S subunit by binding and bridging several RNA helices of the 16S rRNA. In terms of biological role, forms an intersubunit bridge (bridge B4) with the 23S rRNA of the 50S subunit in the ribosome. This Borrelia turicatae (strain 91E135) protein is Small ribosomal subunit protein uS15.